A 341-amino-acid chain; its full sequence is L-threonine 3-dehydrogenase (341 aa).

Cys38 serves as a coordination point for Zn(2+). Residues Thr40 and His43 each act as charge relay system in the active site. 6 residues coordinate Zn(2+): His63, Glu64, Cys93, Cys96, Cys99, and Cys107. NAD(+) is bound by residues Ile175, Asp195, Arg200, 262-264 (LGI), and 286-287 (IY).

This sequence belongs to the zinc-containing alcohol dehydrogenase family. In terms of assembly, homotetramer. Zn(2+) serves as cofactor.

The protein resides in the cytoplasm. The catalysed reaction is L-threonine + NAD(+) = (2S)-2-amino-3-oxobutanoate + NADH + H(+). It functions in the pathway amino-acid degradation; L-threonine degradation via oxydo-reductase pathway; glycine from L-threonine: step 1/2. Functionally, catalyzes the NAD(+)-dependent oxidation of L-threonine to 2-amino-3-ketobutyrate. This chain is L-threonine 3-dehydrogenase, found in Klebsiella pneumoniae subsp. pneumoniae (strain ATCC 700721 / MGH 78578).